The chain runs to 228 residues: Ribonuclease HII (228 aa).

The RNase H type-2 domain occupies 26-214; that stretch reads RAVAGVDEVG…VRAHSRFPLD (189 aa). A divalent metal cation-binding residues include Asp-32, Glu-33, and Asp-124.

This sequence belongs to the RNase HII family. Requires Mn(2+) as cofactor. The cofactor is Mg(2+).

It localises to the cytoplasm. The catalysed reaction is Endonucleolytic cleavage to 5'-phosphomonoester.. In terms of biological role, endonuclease that specifically degrades the RNA of RNA-DNA hybrids. This is Ribonuclease HII from Solibacter usitatus (strain Ellin6076).